The chain runs to 436 residues: Glutamate-1-semialdehyde 2,1-aminomutase (436 aa).

Lys270 is modified (N6-(pyridoxal phosphate)lysine).

This sequence belongs to the class-III pyridoxal-phosphate-dependent aminotransferase family. HemL subfamily. In terms of assembly, homodimer. Pyridoxal 5'-phosphate is required as a cofactor.

It localises to the cytoplasm. The catalysed reaction is (S)-4-amino-5-oxopentanoate = 5-aminolevulinate. It participates in porphyrin-containing compound metabolism; protoporphyrin-IX biosynthesis; 5-aminolevulinate from L-glutamyl-tRNA(Glu): step 2/2. This is Glutamate-1-semialdehyde 2,1-aminomutase from Cutibacterium acnes (strain DSM 16379 / KPA171202) (Propionibacterium acnes).